The chain runs to 452 residues: MEKQYLTVTALTRYIKTKIEYDPHLQSVWLKGEISNFKYHSRGHMYFTLKDENARIAAVMFAGHNRNIKFRPENGMKVLVKGKISVYEASGSYQIYIQDMQPDGIGNLHLAYEQLKVRLEEEGLFSQVYKKIIPPYAKTIGVITSPTGAAIRDIITTIKRRYPIGNVIVFPVLVQGESAAPSIVQAIRTANEMGDIDVLIVGRGGGSIEELWAFNEEVVAREIFTSEIPIISAVGHETDFTIADFVADLRAPTPTAAAELAVPNTIELQEKVLQRTLRLQRAMRERVHKKEEKLQVLQKSYAFRYPRQVYEQKEEQLDRALEQLVLAKERYIDKKVNQLKQLSFYLEKHHPSQKIIQTKTAIETLQKQLQREMQTLLQTKEFVFVRAAQKLEVLSPLKVMMRGYGLVYDEEKQVLKSVKDVSLGDAVSVQLQDGILDCSVSSIEERELNNGK.

The protein belongs to the XseA family. In terms of assembly, heterooligomer composed of large and small subunits.

It is found in the cytoplasm. The enzyme catalyses Exonucleolytic cleavage in either 5'- to 3'- or 3'- to 5'-direction to yield nucleoside 5'-phosphates.. Functionally, bidirectionally degrades single-stranded DNA into large acid-insoluble oligonucleotides, which are then degraded further into small acid-soluble oligonucleotides. This is Exodeoxyribonuclease 7 large subunit from Bacillus mycoides (strain KBAB4) (Bacillus weihenstephanensis).